We begin with the raw amino-acid sequence, 212 residues long: Methylthioribulose-1-phosphate dehydratase (212 aa).

Zn(2+) is bound by residues His97 and His99.

It belongs to the aldolase class II family. MtnB subfamily. As to quaternary structure, homotetramer. Zn(2+) is required as a cofactor.

It catalyses the reaction 5-(methylsulfanyl)-D-ribulose 1-phosphate = 5-methylsulfanyl-2,3-dioxopentyl phosphate + H2O. The protein operates within amino-acid biosynthesis; L-methionine biosynthesis via salvage pathway; L-methionine from S-methyl-5-thio-alpha-D-ribose 1-phosphate: step 2/6. Functionally, catalyzes the dehydration of methylthioribulose-1-phosphate (MTRu-1-P) into 2,3-diketo-5-methylthiopentyl-1-phosphate (DK-MTP-1-P). The polypeptide is Methylthioribulose-1-phosphate dehydratase (Bacillus cereus (strain AH187)).